The following is a 110-amino-acid chain: MTSTRKLSVSCLIVFMVSSLIAVSSGWLSIGKIAIKDGKCDPKNGNLYAIGEKWYNDEDCFEITCVQGDKGSVAQQVASCPVHAVKPGCELVFPGGTYPKCCPYYECPNS.

An N-terminal signal peptide occupies residues 1 to 26 (MTSTRKLSVSCLIVFMVSSLIAVSSG).

It belongs to the scoloptoxin-16 family. Post-translationally, contains 4 disulfide bonds. In terms of tissue distribution, expressed by the venom gland.

Its subcellular location is the secreted. This Ethmostigmus rubripes (Giant centipede) protein is U-scoloptoxin(16)-Er7a.